Reading from the N-terminus, the 633-residue chain is 1-deoxy-D-xylulose-5-phosphate synthase 2 (633 aa).

Thiamine diphosphate-binding positions include His-73 and 113–115 (SHA). Asp-145 is a binding site for Mg(2+). Thiamine diphosphate is bound by residues 146 to 147 (GA), Asn-175, Tyr-286, and Glu-367. Position 175 (Asn-175) interacts with Mg(2+).

This sequence belongs to the transketolase family. DXPS subfamily. Homodimer. Mg(2+) is required as a cofactor. Requires thiamine diphosphate as cofactor.

It carries out the reaction D-glyceraldehyde 3-phosphate + pyruvate + H(+) = 1-deoxy-D-xylulose 5-phosphate + CO2. Its pathway is metabolic intermediate biosynthesis; 1-deoxy-D-xylulose 5-phosphate biosynthesis; 1-deoxy-D-xylulose 5-phosphate from D-glyceraldehyde 3-phosphate and pyruvate: step 1/1. Catalyzes the acyloin condensation reaction between C atoms 2 and 3 of pyruvate and glyceraldehyde 3-phosphate to yield 1-deoxy-D-xylulose-5-phosphate (DXP). This Kitasatospora griseola (Streptomyces griseolosporeus) protein is 1-deoxy-D-xylulose-5-phosphate synthase 2.